Here is a 155-residue protein sequence, read N- to C-terminus: Interleukin-2 (155 aa).

Residues 1-20 form the signal peptide; it reads MYKIQLLSCIALTLALVANG. The O-linked (GalNAc...) threonine glycan is linked to Thr23. A disulfide bridge links Cys79 with Cys127.

The protein belongs to the IL-2 family.

It localises to the secreted. Cytokine produced by activated CD4-positive helper T-cells and to a lesser extend activated CD8-positive T-cells and natural killer (NK) cells that plays pivotal roles in the immune response and tolerance. Binds to a receptor complex composed of either the high-affinity trimeric IL-2R (IL2RA/CD25, IL2RB/CD122 and IL2RG/CD132) or the low-affinity dimeric IL-2R (IL2RB and IL2RG). Interaction with the receptor leads to oligomerization and conformation changes in the IL-2R subunits resulting in downstream signaling starting with phosphorylation of JAK1 and JAK3. In turn, JAK1 and JAK3 phosphorylate the receptor to form a docking site leading to the phosphorylation of several substrates including STAT5. This process leads to activation of several pathways including STAT, phosphoinositide-3-kinase/PI3K and mitogen-activated protein kinase/MAPK pathways. Functions as a T-cell growth factor and can increase NK-cell cytolytic activity as well. Promotes strong proliferation of activated B-cells and subsequently immunoglobulin production. Plays a pivotal role in regulating the adaptive immune system by controlling the survival and proliferation of regulatory T-cells, which are required for the maintenance of immune tolerance. Moreover, participates in the differentiation and homeostasis of effector T-cell subsets, including Th1, Th2, Th17 as well as memory CD8-positive T-cells. This chain is Interleukin-2 (IL2), found in Boselaphus tragocamelus (Nilgai).